The primary structure comprises 46 residues: Apamin (46 aa).

Positions 1-27 (MISMLRCIYLFLSVILITSYFVTPVMP) are cleaved as a signal peptide. 2 disulfide bridges follow: Cys-28/Cys-38 and Cys-30/Cys-42. Residues 40-41 (RR) are essential for toxin activity. The residue at position 45 (His-45) is a Histidine amide.

Expressed by the venom gland.

The protein localises to the secreted. Its function is as follows. Toxin with unique selectivity to KCa2 channels. Potently blocks human, rat and mouse KCa2.2/KCNN2/SK2 channels (IC(50)=27-140 pM), and moderately blocks human and rat KCa2.3/KCNN3/SK3 channels (IC(50)=0.6-4 nM), and human (IC(50)=0.7-12 nM) and mouse (IC(50)=28 nM) KCa2.1/KCNN1/SK1 channels. Does not show any antimicrobial activity. In vivo, intracerebroventricular injection into rats of a dose of 1 ng results in neurodegeneration specifically in the Purkinje cells of the cerebellum, and induces seizures characterized by hypersensitivity to noise, loss of postural control, paroxystic jerking, and alternating periods of great agitation with tonic-clonic convulsions and periods of total prostration. When administered at high doses, exerts anti-inflammatory, anti-oxidative, anti-fibrotic and anti-apoptotic properties in several models of inflammatory disease, including gouty arthritis, atherosclerosis, atopic dermatitis and acute kidney injury. Down-regulates pro-inflammatory signaling pathways, such as the NF-kappaB and STAT3 pathways, probably by blocking SK channels such as KCa2.2/KCNN2/SK2 and/or KCa2.3/KCNN3/SK3 which are thought to be involved in promoting some inflammatory responses. For example in mouse and rat microglia cells, inhibits LPS-activated KCa2.2/KCNN2/SK2 channels and TLR4 expression leading to the down-regulation of the NF-kappaB, STAT, and MAPK/ERK signaling pathways and, as a consequence, decreases secretion of pro-inflammatory cytokines. The chain is Apamin from Apis mellifera (Honeybee).